A 244-amino-acid polypeptide reads, in one-letter code: Small ribosomal subunit protein uS3 (244 aa).

The 69-residue stretch at 38 to 106 (IRKYLNARLA…EVQINIFEVK (69 aa)) folds into the KH type-2 domain. Residues 222–235 (TGRRNDNAGGNRDK) show a composition bias toward basic and acidic residues. Positions 222–244 (TGRRNDNAGGNRDKNFKRKRANR) are disordered.

This sequence belongs to the universal ribosomal protein uS3 family. In terms of assembly, part of the 30S ribosomal subunit. Forms a tight complex with proteins S10 and S14.

Functionally, binds the lower part of the 30S subunit head. Binds mRNA in the 70S ribosome, positioning it for translation. The sequence is that of Small ribosomal subunit protein uS3 from Parabacteroides distasonis (strain ATCC 8503 / DSM 20701 / CIP 104284 / JCM 5825 / NCTC 11152).